The following is a 467-amino-acid chain: Pancreatic lipase-related protein 3 (467 aa).

An N-terminal signal peptide occupies residues 1 to 17 (MLGIWIVAFLFFGTSRG). Residues C21 and C27 are joined by a disulfide bond. An N-linked (GlcNAc...) asparagine glycan is attached at N74. A disulfide bridge connects residues C107 and C118. N125 is a glycosylation site (N-linked (GlcNAc...) asparagine). The Nucleophile role is filled by S168. The active-site Charge relay system is the D191. Cysteines 252 and 277 form a disulfide. H279 serves as the catalytic Charge relay system. Disulfide bonds link C301/C312, C315/C320, and C451/C467. Residues 355-467 (WRHKLSVKLS…PNILQNLKPC (113 aa)) enclose the PLAT domain.

It belongs to the AB hydrolase superfamily. Lipase family. As to expression, overexpressed in hepatocellular carcinoma.

The protein localises to the secreted. It catalyses the reaction a triacylglycerol + H2O = a diacylglycerol + a fatty acid + H(+). The protein is Pancreatic lipase-related protein 3 (PNLIPRP3) of Homo sapiens (Human).